The following is a 452-amino-acid chain: uncharacterized protein (452 aa).

The region spanning 3–61 (KVKIGEKYEVDITSMGHEGEGVGRIDGIAVFVKGALKGERVIVEIEEVHKNYLKGYTVK) is the TRAM domain. [4Fe-4S] cluster contacts are provided by C74, C80, C83, and C160. S-adenosyl-L-methionine is bound by residues Q284, Y313, E334, and D382. C409 functions as the Nucleophile in the catalytic mechanism.

Belongs to the class I-like SAM-binding methyltransferase superfamily. RNA M5U methyltransferase family.

This is an uncharacterized protein from Caldanaerobacter subterraneus subsp. tengcongensis (strain DSM 15242 / JCM 11007 / NBRC 100824 / MB4) (Thermoanaerobacter tengcongensis).